Here is a 299-residue protein sequence, read N- to C-terminus: Sulfate adenylyltransferase subunit 2 (299 aa).

Residues E276–F299 are disordered.

This sequence belongs to the PAPS reductase family. CysD subfamily. As to quaternary structure, heterodimer composed of CysD, the smaller subunit, and CysN.

The enzyme catalyses sulfate + ATP + H(+) = adenosine 5'-phosphosulfate + diphosphate. It functions in the pathway sulfur metabolism; hydrogen sulfide biosynthesis; sulfite from sulfate: step 1/3. Its function is as follows. With CysN forms the ATP sulfurylase (ATPS) that catalyzes the adenylation of sulfate producing adenosine 5'-phosphosulfate (APS) and diphosphate, the first enzymatic step in sulfur assimilation pathway. APS synthesis involves the formation of a high-energy phosphoric-sulfuric acid anhydride bond driven by GTP hydrolysis by CysN coupled to ATP hydrolysis by CysD. This Pseudoalteromonas translucida (strain TAC 125) protein is Sulfate adenylyltransferase subunit 2.